We begin with the raw amino-acid sequence, 90 residues long: Small ribosomal subunit protein uS15c (90 aa).

It belongs to the universal ribosomal protein uS15 family. As to quaternary structure, part of the 30S ribosomal subunit.

It is found in the plastid. The protein resides in the chloroplast. In Secale cereale (Rye), this protein is Small ribosomal subunit protein uS15c (rps15).